A 445-amino-acid polypeptide reads, in one-letter code: Phosphoglucosamine mutase (445 aa).

Residue S102 is the Phosphoserine intermediate of the active site. The Mg(2+) site is built by S102, D241, D243, and D245. The residue at position 102 (S102) is a Phosphoserine.

This sequence belongs to the phosphohexose mutase family. Mg(2+) is required as a cofactor. Post-translationally, activated by phosphorylation.

The enzyme catalyses alpha-D-glucosamine 1-phosphate = D-glucosamine 6-phosphate. In terms of biological role, catalyzes the conversion of glucosamine-6-phosphate to glucosamine-1-phosphate. The sequence is that of Phosphoglucosamine mutase from Variovorax paradoxus (strain S110).